The following is a 368-amino-acid chain: Protein-glutamate methylesterase/protein-glutamine glutaminase 1 (368 aa).

A Response regulatory domain is found at 4–121 (KVLVVDDSGF…SRNPDKVRQL (118 aa)). Asp55 carries the 4-aspartylphosphate modification. The segment at 138–176 (SLPPLPSATSSSHAPASSSSVGASARVGAGASPAPASTS) is disordered. Low complexity predominate over residues 144–176 (SATSSSHAPASSSSVGASARVGAGASPAPASTS). The region spanning 172–368 (PASTSAAPKR…IGRHLVEACQ (197 aa)) is the CheB-type methylesterase domain. Catalysis depends on residues Ser192, His219, and Asp312.

This sequence belongs to the CheB family. In terms of processing, phosphorylated by CheA. Phosphorylation of the N-terminal regulatory domain activates the methylesterase activity.

It is found in the cytoplasm. The enzyme catalyses [protein]-L-glutamate 5-O-methyl ester + H2O = L-glutamyl-[protein] + methanol + H(+). It catalyses the reaction L-glutaminyl-[protein] + H2O = L-glutamyl-[protein] + NH4(+). Involved in chemotaxis. Part of a chemotaxis signal transduction system that modulates chemotaxis in response to various stimuli. Catalyzes the demethylation of specific methylglutamate residues introduced into the chemoreceptors (methyl-accepting chemotaxis proteins or MCP) by CheR. Also mediates the irreversible deamidation of specific glutamine residues to glutamic acid. The sequence is that of Protein-glutamate methylesterase/protein-glutamine glutaminase 1 from Pseudomonas aeruginosa (strain ATCC 15692 / DSM 22644 / CIP 104116 / JCM 14847 / LMG 12228 / 1C / PRS 101 / PAO1).